The following is a 169-amino-acid chain: 6,7-dimethyl-8-ribityllumazine synthase (169 aa).

5-amino-6-(D-ribitylamino)uracil is bound by residues Phe-24, 58-60 (ALE), and 82-84 (AVI). 87–88 (ET) is a binding site for (2S)-2-hydroxy-3-oxobutyl phosphate. His-90 functions as the Proton donor in the catalytic mechanism. 5-amino-6-(D-ribitylamino)uracil is bound at residue Asn-115. Arg-129 contributes to the (2S)-2-hydroxy-3-oxobutyl phosphate binding site.

The protein belongs to the DMRL synthase family.

The catalysed reaction is (2S)-2-hydroxy-3-oxobutyl phosphate + 5-amino-6-(D-ribitylamino)uracil = 6,7-dimethyl-8-(1-D-ribityl)lumazine + phosphate + 2 H2O + H(+). Its pathway is cofactor biosynthesis; riboflavin biosynthesis; riboflavin from 2-hydroxy-3-oxobutyl phosphate and 5-amino-6-(D-ribitylamino)uracil: step 1/2. Catalyzes the formation of 6,7-dimethyl-8-ribityllumazine by condensation of 5-amino-6-(D-ribitylamino)uracil with 3,4-dihydroxy-2-butanone 4-phosphate. This is the penultimate step in the biosynthesis of riboflavin. This is 6,7-dimethyl-8-ribityllumazine synthase from Burkholderia vietnamiensis (strain G4 / LMG 22486) (Burkholderia cepacia (strain R1808)).